Consider the following 620-residue polypeptide: Translocator protein BipB (620 aa).

Residues 58–95 (QCDAQPAAHDARLDDKPALRAPQERDAPPLGASDTGSR) form a disordered region. Residues 66–84 (HDARLDDKPALRAPQERDA) show a composition bias toward basic and acidic residues. Residues 309–339 (EMQAKREAELQKKSDEYQAQVKKAEEMQKTM) are a coiled coil. The next 3 membrane-spanning stretches (helical) occupy residues 355–375 (FAAA…GLAL), 401–421 (AILK…LVAC), and 430–450 (LAGA…AAFV).

This sequence belongs to the SctE/SipB/YopB family.

The protein resides in the secreted. It is found in the host membrane. Its function is as follows. Plays a role in the bacterium-induced formation of multinucleated giant cell (MNGC), which is formed after host cell fusion, as well as in the intercellular spreading of bacteria and in the induction of apoptosis in macrophages. May act in concert with other effector proteins to induce fusion of host cell membranes. The chain is Translocator protein BipB (bipB) from Burkholderia pseudomallei (strain 1106a).